Consider the following 254-residue polypeptide: MTAAFTVVIPARYGSSRFPGKPLKTIAGKPMVQLVWEQARKSSAERVVIATDDARIVEACRAFGAEVLLTRDDHNSGTDRLAEVATQLGLAANAIVVNVQGDEPLIPPAVIDQVAANLAKHPEAGMATLAEPIDDVAALFNPNIVKVSTDINGLALTFSRAPLPWARDALARSKDELPADVPYRRHIGIYAYRAGFLHDFVSWGPCWLENTESLEQLRALWNGVRIHVADALEAPPGGVDTPEDLERVRRLLEA.

Belongs to the KdsB family.

It localises to the cytoplasm. The enzyme catalyses 3-deoxy-alpha-D-manno-oct-2-ulosonate + CTP = CMP-3-deoxy-beta-D-manno-octulosonate + diphosphate. The protein operates within nucleotide-sugar biosynthesis; CMP-3-deoxy-D-manno-octulosonate biosynthesis; CMP-3-deoxy-D-manno-octulosonate from 3-deoxy-D-manno-octulosonate and CTP: step 1/1. It functions in the pathway bacterial outer membrane biogenesis; lipopolysaccharide biosynthesis. Activates KDO (a required 8-carbon sugar) for incorporation into bacterial lipopolysaccharide in Gram-negative bacteria. The polypeptide is 3-deoxy-manno-octulosonate cytidylyltransferase (Pseudomonas syringae pv. tomato (strain ATCC BAA-871 / DC3000)).